A 319-amino-acid chain; its full sequence is Dehydrogenase/reductase SDR family member 9 (319 aa).

The N-terminal stretch at 1-20 is a signal peptide; the sequence is MLLWVLALLFLCAFLWNYKG. NAD(+)-binding positions include 34 to 58 and Asp83; that span reads ITGCDSGFGNLAARTFDRKGFRVIA. Residue Ser164 participates in substrate binding. Catalysis depends on Tyr176, which acts as the Proton acceptor. Lys180 contacts NAD(+).

It belongs to the short-chain dehydrogenases/reductases (SDR) family. As to quaternary structure, homotetramer. As to expression, highly expressed in epithelium of estrus uterus.

The protein resides in the microsome membrane. The protein localises to the endoplasmic reticulum membrane. The catalysed reaction is 3beta-hydroxy-5alpha-pregnane-20-one + NAD(+) = 5alpha-pregnane-3,20-dione + NADH + H(+). It carries out the reaction 17beta-hydroxy-5alpha-androstan-3-one + NAD(+) = 5alpha-androstan-3,17-dione + NADH + H(+). The enzyme catalyses androsterone + NAD(+) = 5alpha-androstan-3,17-dione + NADH + H(+). It catalyses the reaction 5alpha-androstane-3alpha,17beta-diol + NAD(+) = 17beta-hydroxy-5alpha-androstan-3-one + NADH + H(+). The catalysed reaction is all-trans-retinol + NAD(+) = all-trans-retinal + NADH + H(+). It carries out the reaction 3alpha-hydroxy-5alpha-pregnan-20-one + NAD(+) = 5alpha-pregnane-3,20-dione + NADH + H(+). Its function is as follows. 3-alpha-hydroxysteroid dehydrogenase that converts 3-alpha-tetrahydroprogesterone (allopregnanolone) to dihydroxyprogesterone and 3-alpha-androstanediol to dihydroxyprogesterone. Plays also role in the biosynthesis of retinoic acid from retinaldehyde. Can utilize both NADH and NADPH. The polypeptide is Dehydrogenase/reductase SDR family member 9 (Dhrs9) (Rattus norvegicus (Rat)).